The chain runs to 989 residues: SWI/SNF-related matrix-associated actin-dependent regulator of chromatin subfamily A containing DEAD/H box 1 homolog (989 aa).

The tract at residues 1–288 is disordered; it reads MSTTSDFQTG…RRAKRGETKN (288 aa). Residues 72 to 105 are compositionally biased toward acidic residues; the sequence is DDDDEDYVDETMPSEDEEDFDNNEEDEDDDDYEE. Basic residues predominate over residues 109-120; that stretch reads RKRKAPSKKKLV. Over residues 124–140 the composition is skewed to basic and acidic residues; that stretch reads ENYRREDSETPEPEMKR. A compositionally biased stretch (acidic residues) spans 187-200; the sequence is DDESEDDFINDEEI. 2 stretches are compositionally biased toward basic and acidic residues: residues 201–221 and 241–250; these read SEKG…GKDS and AQKEQKKKAE. Residues 251 to 276 are compositionally biased toward acidic residues; that stretch reads SDEDWEEDEDDMNADGDETPSDDSDI. Residues 277-288 show a composition bias toward basic and acidic residues; that stretch reads EERRAKRGETKN. The Helicase ATP-binding domain occupies 406–574; that stretch reads IMMYNKDLNA…ISLMYFVLSK (169 aa). Residue 419 to 426 coordinates ATP; sequence DEMGLGKT. A DEGH box motif is present at residues 525–528; it reads DEGH. Residues 757–912 form the Helicase C-terminal domain; the sequence is QLDVMLPEIQ…GVKGQLDEDA (156 aa). The tract at residues 941–989 is disordered; the sequence is RYDDVEDDSGDSKNGIDAEEAAKKEDEAVKEPVEKEQQKEEESQPSTSA. The segment covering 950–982 has biased composition (basic and acidic residues); it reads GDSKNGIDAEEAAKKEDEAVKEPVEKEQQKEEE.

It belongs to the SNF2/RAD54 helicase family.

It localises to the nucleus. The protein resides in the chromosome. It catalyses the reaction ATP + H2O = ADP + phosphate + H(+). Its function is as follows. DNA helicase that possesses intrinsic ATP-dependent nucleosome-remodeling activity and is both required for DNA repair and heterochromatin organization. Promotes DNA end resection of double-strand breaks (DSBs) following DNA damage: probably acts by weakening histone DNA interactions in nucleosomes flanking DSBs. The chain is SWI/SNF-related matrix-associated actin-dependent regulator of chromatin subfamily A containing DEAD/H box 1 homolog from Caenorhabditis elegans.